We begin with the raw amino-acid sequence, 431 residues long: Adenylosuccinate lyase (431 aa).

Residues 4 to 5, 67 to 69, and 93 to 94 each bind N(6)-(1,2-dicarboxyethyl)-AMP; these read RY, RHD, and TS. The Proton donor/acceptor role is filled by His-141. Gln-212 serves as a coordination point for N(6)-(1,2-dicarboxyethyl)-AMP. Ser-262 serves as the catalytic Proton donor/acceptor. N(6)-(1,2-dicarboxyethyl)-AMP contacts are provided by residues Ser-263, 268 to 270, Asn-276, and 307 to 311; these read KRN and SAERI.

This sequence belongs to the lyase 1 family. Adenylosuccinate lyase subfamily. As to quaternary structure, homotetramer. Residues from neighboring subunits contribute catalytic and substrate-binding residues to each active site.

It catalyses the reaction N(6)-(1,2-dicarboxyethyl)-AMP = fumarate + AMP. The enzyme catalyses (2S)-2-[5-amino-1-(5-phospho-beta-D-ribosyl)imidazole-4-carboxamido]succinate = 5-amino-1-(5-phospho-beta-D-ribosyl)imidazole-4-carboxamide + fumarate. It participates in purine metabolism; AMP biosynthesis via de novo pathway; AMP from IMP: step 2/2. Its pathway is purine metabolism; IMP biosynthesis via de novo pathway; 5-amino-1-(5-phospho-D-ribosyl)imidazole-4-carboxamide from 5-amino-1-(5-phospho-D-ribosyl)imidazole-4-carboxylate: step 2/2. Its function is as follows. Catalyzes two reactions in de novo purine nucleotide biosynthesis. Catalyzes the breakdown of 5-aminoimidazole- (N-succinylocarboxamide) ribotide (SAICAR or 2-[5-amino-1-(5-phospho-beta-D-ribosyl)imidazole-4-carboxamido]succinate) to 5-aminoimidazole-4-carboxamide ribotide (AICAR or 5-amino-1-(5-phospho-beta-D-ribosyl)imidazole-4-carboxamide) and fumarate, and of adenylosuccinate (ADS or N(6)-(1,2-dicarboxyethyl)-AMP) to adenosine monophosphate (AMP) and fumarate. Influences the affinity of glutamyl--tRNA ligase for its substrates and increases its thermostability. This chain is Adenylosuccinate lyase (purB), found in Bacillus subtilis (strain 168).